Consider the following 80-residue polypeptide: Cell division protein ZapB (80 aa).

Positions Phe-3–Gln-80 form a coiled coil.

The protein belongs to the ZapB family. As to quaternary structure, homodimer. The ends of the coiled-coil dimer bind to each other, forming polymers. Interacts with FtsZ.

The protein resides in the cytoplasm. Non-essential, abundant cell division factor that is required for proper Z-ring formation. It is recruited early to the divisome by direct interaction with FtsZ, stimulating Z-ring assembly and thereby promoting cell division earlier in the cell cycle. Its recruitment to the Z-ring requires functional FtsA or ZipA. The protein is Cell division protein ZapB of Proteus mirabilis (strain HI4320).